Reading from the N-terminus, the 220-residue chain is Deoxyribose-phosphate aldolase (220 aa).

The active-site Proton donor/acceptor is Asp-89. Lys-151 functions as the Schiff-base intermediate with acetaldehyde in the catalytic mechanism. Residue Lys-180 is the Proton donor/acceptor of the active site.

Belongs to the DeoC/FbaB aldolase family. DeoC type 1 subfamily.

It is found in the cytoplasm. It carries out the reaction 2-deoxy-D-ribose 5-phosphate = D-glyceraldehyde 3-phosphate + acetaldehyde. It participates in carbohydrate degradation; 2-deoxy-D-ribose 1-phosphate degradation; D-glyceraldehyde 3-phosphate and acetaldehyde from 2-deoxy-alpha-D-ribose 1-phosphate: step 2/2. Its function is as follows. Catalyzes a reversible aldol reaction between acetaldehyde and D-glyceraldehyde 3-phosphate to generate 2-deoxy-D-ribose 5-phosphate. The chain is Deoxyribose-phosphate aldolase from Staphylococcus epidermidis (strain ATCC 35984 / DSM 28319 / BCRC 17069 / CCUG 31568 / BM 3577 / RP62A).